Consider the following 147-residue polypeptide: Hemoglobin subunit epsilon (147 aa).

The Globin domain occupies 3–147 (HLTAEEKSSV…VATALAHKYH (145 aa)). Phosphoserine occurs at positions 14 and 51. Heme b is bound by residues H64 and H93.

It belongs to the globin family. Heterotetramer of two alpha chains and two epsilon chains in early embryonic hemoglobin Gower-2; two zeta chains and two epsilon chains in early embryonic hemoglobin Gower-1. Red blood cells.

Functionally, the epsilon chain is a beta-type chain of early mammalian embryonic hemoglobin. In Carlito syrichta (Philippine tarsier), this protein is Hemoglobin subunit epsilon (HBE1).